Reading from the N-terminus, the 455-residue chain is UDP-N-acetylmuramoylalanine--D-glutamate ligase (455 aa).

Residue 117–123 participates in ATP binding; that stretch reads GTNGKTT.

Belongs to the MurCDEF family.

The protein localises to the cytoplasm. The enzyme catalyses UDP-N-acetyl-alpha-D-muramoyl-L-alanine + D-glutamate + ATP = UDP-N-acetyl-alpha-D-muramoyl-L-alanyl-D-glutamate + ADP + phosphate + H(+). Its pathway is cell wall biogenesis; peptidoglycan biosynthesis. Cell wall formation. Catalyzes the addition of glutamate to the nucleotide precursor UDP-N-acetylmuramoyl-L-alanine (UMA). The sequence is that of UDP-N-acetylmuramoylalanine--D-glutamate ligase from Pelotomaculum thermopropionicum (strain DSM 13744 / JCM 10971 / SI).